Reading from the N-terminus, the 239-residue chain is Probable transcriptional regulatory protein BCG9842_B4761 (239 aa).

This sequence belongs to the TACO1 family. YeeN subfamily.

The protein localises to the cytoplasm. The protein is Probable transcriptional regulatory protein BCG9842_B4761 of Bacillus cereus (strain G9842).